Consider the following 221-residue polypeptide: Germin-like protein subfamily 1 member 19 (221 aa).

A signal peptide spans methionine 1–alanine 21. Cysteine 31 and cysteine 48 are joined by a disulfide. One can recognise a Cupin type-1 domain in the interval serine 76–lysine 213. A glycan (N-linked (GlcNAc...) asparagine) is linked at asparagine 77. 4 residues coordinate Mn(2+): histidine 110, histidine 112, glutamate 117, and histidine 159.

This sequence belongs to the germin family. Oligomer (believed to be a pentamer but probably hexamer).

The protein localises to the secreted. The protein resides in the extracellular space. It is found in the apoplast. In terms of biological role, may play a role in plant defense. Probably has no oxalate oxidase activity even if the active site is conserved. The chain is Germin-like protein subfamily 1 member 19 from Arabidopsis thaliana (Mouse-ear cress).